A 191-amino-acid chain; its full sequence is Fe/S biogenesis protein NfuA (191 aa).

2 residues coordinate [4Fe-4S] cluster: Cys149 and Cys152.

The protein belongs to the NfuA family. In terms of assembly, homodimer. It depends on [4Fe-4S] cluster as a cofactor.

Involved in iron-sulfur cluster biogenesis. Binds a 4Fe-4S cluster, can transfer this cluster to apoproteins, and thereby intervenes in the maturation of Fe/S proteins. Could also act as a scaffold/chaperone for damaged Fe/S proteins. This Pseudoalteromonas translucida (strain TAC 125) protein is Fe/S biogenesis protein NfuA.